A 39-amino-acid chain; its full sequence is MVNTGRVPLWLVGLVGGFAVITIVSLFIYGSYSGLGSSL.

The helical transmembrane segment at 9–29 (LWLVGLVGGFAVITIVSLFIY) threads the bilayer.

This sequence belongs to the PsbJ family. As to quaternary structure, PSII is composed of 1 copy each of membrane proteins PsbA, PsbB, PsbC, PsbD, PsbE, PsbF, PsbH, PsbI, PsbJ, PsbK, PsbL, PsbM, PsbT, PsbX, PsbY, PsbZ, Psb30/Ycf12, at least 3 peripheral proteins of the oxygen-evolving complex and a large number of cofactors. It forms dimeric complexes.

The protein resides in the plastid. It is found in the chloroplast thylakoid membrane. One of the components of the core complex of photosystem II (PSII). PSII is a light-driven water:plastoquinone oxidoreductase that uses light energy to abstract electrons from H(2)O, generating O(2) and a proton gradient subsequently used for ATP formation. It consists of a core antenna complex that captures photons, and an electron transfer chain that converts photonic excitation into a charge separation. This chain is Photosystem II reaction center protein J, found in Thalassiosira pseudonana (Marine diatom).